The following is an 86-amino-acid chain: Small ribosomal subunit protein bS20 (86 aa).

The span at 1–11 (MANIKSQKKRV) shows a compositional bias: basic residues. Residues 1–20 (MANIKSQKKRVRTNEKAHQR) form a disordered region.

This sequence belongs to the bacterial ribosomal protein bS20 family.

Functionally, binds directly to 16S ribosomal RNA. The protein is Small ribosomal subunit protein bS20 of Bifidobacterium animalis subsp. lactis (strain AD011).